Reading from the N-terminus, the 225-residue chain is Ribose-5-phosphate isomerase A (225 aa).

Substrate is bound by residues 33–36 (TGST), 86–89 (DGAD), and 99–102 (KGGG). E108 (proton acceptor) is an active-site residue. K126 contacts substrate.

Belongs to the ribose 5-phosphate isomerase family. In terms of assembly, homodimer.

It catalyses the reaction aldehydo-D-ribose 5-phosphate = D-ribulose 5-phosphate. The protein operates within carbohydrate degradation; pentose phosphate pathway; D-ribose 5-phosphate from D-ribulose 5-phosphate (non-oxidative stage): step 1/1. Functionally, catalyzes the reversible conversion of ribose-5-phosphate to ribulose 5-phosphate. This is Ribose-5-phosphate isomerase A from Bordetella petrii (strain ATCC BAA-461 / DSM 12804 / CCUG 43448).